The following is a 673-amino-acid chain: Probable urea active transporter 2 (673 aa).

14 consecutive transmembrane segments (helical) span residues 8–28 (GYGYGFALGLGAAFALLMAII), 83–103 (IMGGFMYGVGGTIQITLFLFL), 132–152 (VYLFYCISTNVLVSSLLLLGG), 164–184 (TVAACFLLPLGVMVYTTLGGL), 196–218 (VMIYIILIVTCYTVYCSSSLIGS), 249–269 (MMYLTWSVMIGGLSSVFGDPG), 287–307 (LMGGLCWWIIPMALGSSAGLA), 336–356 (IYGMASIFGKSGAAAGLVMLF), 391–411 (QLVRTAHLSVIGFSLFIGALS), 424–446 (LLTFLGIILTPEVSAVTLCLFWN), 451–471 (FSLVVGAPFGTITGVVCWLAS), 492–512 (FVGNIVSMASSPLYIVLLSYI), 559–579 (IGINLFILIGCYVIIPTALLG), and 592–612 (LIIVCLIWILVAAIYIILFPL).

This sequence belongs to the sodium:solute symporter (SSF) (TC 2.A.21) family.

The protein resides in the endoplasmic reticulum membrane. In terms of biological role, involved in active transport of urea. This Schizosaccharomyces pombe (strain 972 / ATCC 24843) (Fission yeast) protein is Probable urea active transporter 2 (dur3-2).